The primary structure comprises 721 residues: DNA ligase (721 aa).

NAD(+)-binding positions include 42–46 (DAEYD), 91–92 (SL), and Glu-125. Lys-127 functions as the N6-AMP-lysine intermediate in the catalytic mechanism. NAD(+) is bound by residues Arg-148, Glu-184, Lys-300, and Lys-324. Zn(2+)-binding residues include Cys-430, Cys-433, Cys-448, and Cys-454. The 80-residue stretch at 642–721 (STGSPVEGKT…DAWFTLVGEE (80 aa)) folds into the BRCT domain.

The protein belongs to the NAD-dependent DNA ligase family. LigA subfamily. The cofactor is Mg(2+). Mn(2+) is required as a cofactor.

The catalysed reaction is NAD(+) + (deoxyribonucleotide)n-3'-hydroxyl + 5'-phospho-(deoxyribonucleotide)m = (deoxyribonucleotide)n+m + AMP + beta-nicotinamide D-nucleotide.. DNA ligase that catalyzes the formation of phosphodiester linkages between 5'-phosphoryl and 3'-hydroxyl groups in double-stranded DNA using NAD as a coenzyme and as the energy source for the reaction. It is essential for DNA replication and repair of damaged DNA. In Brucella anthropi (strain ATCC 49188 / DSM 6882 / CCUG 24695 / JCM 21032 / LMG 3331 / NBRC 15819 / NCTC 12168 / Alc 37) (Ochrobactrum anthropi), this protein is DNA ligase.